A 233-amino-acid polypeptide reads, in one-letter code: 2-C-methyl-D-erythritol 4-phosphate cytidylyltransferase (233 aa).

Belongs to the IspD/TarI cytidylyltransferase family. IspD subfamily.

The enzyme catalyses 2-C-methyl-D-erythritol 4-phosphate + CTP + H(+) = 4-CDP-2-C-methyl-D-erythritol + diphosphate. It participates in isoprenoid biosynthesis; isopentenyl diphosphate biosynthesis via DXP pathway; isopentenyl diphosphate from 1-deoxy-D-xylulose 5-phosphate: step 2/6. Functionally, catalyzes the formation of 4-diphosphocytidyl-2-C-methyl-D-erythritol from CTP and 2-C-methyl-D-erythritol 4-phosphate (MEP). This Aromatoleum aromaticum (strain DSM 19018 / LMG 30748 / EbN1) (Azoarcus sp. (strain EbN1)) protein is 2-C-methyl-D-erythritol 4-phosphate cytidylyltransferase.